We begin with the raw amino-acid sequence, 263 residues long: MNRRRRIYEGKAKILYEGPEPGTLIQFFKDDATAFNKKKHEVVDGKGVLNNRISEYIFEHLNRIGIPTHFIRRLNMREQLIKEVEIVPLEIVVRNIAAGSLAKRLGIEEGTVLPRSIIEFYYKADALDDPMVSEEHITAFGWASPQEIDDIMALSIRVNDFLTGLFLGVGIQLVDFKIECGRLWEGDMMRIVVADEISPDSCRLWDINTRDKLDKDRFRRDMGGLVEAYQEVARRLGIMNENEPPKPAGPVLVSSKPDGETRH.

Residues 239 to 263 (MNENEPPKPAGPVLVSSKPDGETRH) form a disordered region.

The protein belongs to the SAICAR synthetase family.

The enzyme catalyses 5-amino-1-(5-phospho-D-ribosyl)imidazole-4-carboxylate + L-aspartate + ATP = (2S)-2-[5-amino-1-(5-phospho-beta-D-ribosyl)imidazole-4-carboxamido]succinate + ADP + phosphate + 2 H(+). It participates in purine metabolism; IMP biosynthesis via de novo pathway; 5-amino-1-(5-phospho-D-ribosyl)imidazole-4-carboxamide from 5-amino-1-(5-phospho-D-ribosyl)imidazole-4-carboxylate: step 1/2. In Chelativorans sp. (strain BNC1), this protein is Phosphoribosylaminoimidazole-succinocarboxamide synthase.